We begin with the raw amino-acid sequence, 398 residues long: UPF0496 protein At5g66660 (398 aa).

Transmembrane regions (helical) follow at residues 240-260 and 263-283; these read VFFA…TTMS and PVVC…GKWF.

Belongs to the UPF0496 family.

Its subcellular location is the membrane. In Arabidopsis thaliana (Mouse-ear cress), this protein is UPF0496 protein At5g66660.